The sequence spans 234 residues: MKILSCLLLCTITVLEGNVMNRHNKRFAGFNVAGIGGTAGCVVVDNKLFANGFFLRELTAEEQREFAQYVEESNKYKEELKVSLEERRKGWQIARQSEKGAKILSTITEKNLPKPPKKPSFCTAADTTQYYFDGCMVQNNKIFVGQSYVRDLTADEAKELKSFDVKMTAYQKYLSSSIQQQMNSLFGDKTNLLNLFTNTHLESTSQASEATTIPTTTQTPVEAPETPSFCVPIY.

A signal peptide spans 1 to 17; that stretch reads MKILSCLLLCTITVLEG. Residues Cys-135 and Cys-230 are joined by a disulfide bond. Positions 204–234 are disordered; that stretch reads TSQASEATTIPTTTQTPVEAPETPSFCVPIY. Positions 211–220 are enriched in low complexity; that stretch reads TTIPTTTQTP.

The protein belongs to the protease inhibitor I33 family.

It localises to the secreted. Functionally, aspartyl protease inhibitor. This is Filarial antigen Av33 from Acanthocheilonema viteae (Filarial nematode worm).